A 2254-amino-acid polypeptide reads, in one-letter code: MDEEEDGAGAEESGQPRSFTQLNDLSGAGGRQGPGSTEKDPGSADSEAEGLPYPALAPVVFFYLSQDSRPRSWCLRTVCNPWFERVSMLVILLNCVTLGMFRPCEDIACDSQRCRILQAFDDFIFAFFAVEMVVKMVALGIFGKKCYLGDTWNRLDFFIVIAGMLEYSLDLQNVSFSAVRTVRVLRPLRAINRVPSMRILVTLLLDTLPMLGNVLLLCFFVFFIFGIVGVQLWAGLLRNRCFLPENFSLPLSVDLEPYYQTENEDESPFICSQPRENGMRSCRSVPTLRGEGGGGPPCSLDYETYNSSSNTTCVNWNQYYTNCSAGEHNPFKGAINFDNIGYAWIAIFQVITLEGWVDIMYFVMDAHSFYNFIYFILLIIVGSFFMINLCLVVIATQFSETKQRESQLMREQRVRFLSNASTLASFSEPGSCYEELLKYLVYILRKAARRLAQVSRAIGVRAGLLSSPVARSGQEPQPSGSCTRSHRRLSVHHLVHHHHHHHHHYHLGNGTLRVPRASPEIQDRDANGSRRLMLPPPSTPTPSGGPPRGAESVHSFYHADCHLEPVRCQAPPPRCPSEASGRTVGSGKVYPTVHTSPPPEILKDKALVEVAPSPGPPTLTSFNIPPGPFSSMHKLLETQSTGACHSSCKISSPCSKADSGACGPDSCPYCARTGAGEPESADHVMPDSDSEAVYEFTQDAQHSDLRDPHSRRRQRSLGPDAEPSSVLAFWRLICDTFRKIVDSKYFGRGIMIAILVNTLSMGIEYHEQPEELTNALEISNIVFTSLFALEMLLKLLVYGPFGYIKNPYNIFDGVIVVISVWEIVGQQGGGLSVLRTFRLMRVLKLVRFLPALQRQLVVLMKTMDNVATFCMLLMLFIFIFSILGMHLFGCKFASERDGDTLPDRKNFDSLLWAIVTVFQILTQEDWNKVLYNGMASTSSWAALYFIALMTFGNYVLFNLLVAILVEGFQAEGDATKSESEPDFFSPSVDGDGDRKKRLALVALGEHAELRKSLLPPLIIHTAATPMSHPKSSSTGVGEALGSGSRRTSSSGSAEPGAAHHEMKCPPSARSSPHSPWSAASSWTSRRSSRNSLGRAPSLKRRSPSGERRSLLSGEGQESQDEEESSEEDRASPAGSDHRHRGSLEREAKSSFDLPDTLQVPGLHRTASGRSSASEHQDCNGKSASGRLARTLRTDDPQLDGDDDNDEGNLSKGERIQAWVRSRLPACCRERDSWSAYIFPPQSRFRLLCHRIITHKMFDHVVLVIIFLNCITIAMERPKIDPHSAERIFLTLSNYIFTAVFLAEMTVKVVALGWCFGEQAYLRSSWNVLDGLLVLISVIDILVSMVSDSGTKILGMLRVLRLLRTLRPLRVISRAQGLKLVVETLMSSLKPIGNIVVICCAFFIIFGILGVQLFKGKFFVCQGEDTRNITNKSDCAEASYRWVRHKYNFDNLGQALMSLFVLASKDGWVDIMYDGLDAVGVDQQPIMNHNPWMLLYFISFLLIVAFFVLNMFVGVVVENFHKCRQHQEEEEARRREEKRLRRLEKKRRSKEKQMAEAQCKPYYSDYSRFRLLVHHLCTSHYLDLFITGVIGLNVVTMAMEHYQQPQILDEALKICNYIFTVIFVFESVFKLVAFGFRRFFQDRWNQLDLAIVLLSIMGITLEEIEVNLSLPINPTIIRIMRVLRIARVLKLLKMAVGMRALLHTVMQALPQVGNLGLLFMLLFFIFAALGVELFGDLECDETHPCEGLGRHATFRNFGMAFLTLFRVSTGDNWNGIMKDTLRDCDQESTCYNTVISPIYFVSFVLTAQFVLVNVVIAVLMKHLEESNKEAKEEAELEAELELEMKTLSPQPHSPLGSPFLWPGVEGVNSTDSPKPGAPHTTAHIGAASGFSLEHPTMVPHPEEVPVPLGPDLLTVRKSGVSRTHSLPNDSYMCRNGSTAERSLGHRGWGLPKAQSGSILSVHSQPADTSCILQLPKDVHYLLQPHGAPTWGAIPKLPPPGRSPLAQRPLRRQAAIRTDSLDVQGLGSREDLLSEVSGPSCPLTRSSSFWGGSSIQVQQRSGIQSKVSKHIRLPAPCPGLEPSWAKDPPETRSSLELDTELSWISGDLLPSSQEEPLFPRDLKKCYSVETQSCRRRPGFWLDEQRRHSIAVSCLDSGSQPRLCPSPSSLGGQPLGGPGSRPKKKLSPPSISIDPPESQGSRPPCSPGVCLRRRAPASDSKDPSVSSPLDSTAASPSPKKDTLSLSGLSSDPTDMDP.

The interval 1-48 is disordered; it reads MDEEEDGAGAEESGQPRSFTQLNDLSGAGGRQGPGSTEKDPGSADSEA. Over 1–80 the chain is Cytoplasmic; the sequence is MDEEEDGAGA…RSWCLRTVCN (80 aa). The segment covering 15–24 has biased composition (polar residues); sequence QPRSFTQLND. One copy of the I repeat lies at 68-398; the sequence is SRPRSWCLRT…LCLVVIATQF (331 aa). Residues 81–101 form a helical membrane-spanning segment; sequence PWFERVSMLVILLNCVTLGMF. The Extracellular portion of the chain corresponds to 102–119; the sequence is RPCEDIACDSQRCRILQA. A helical transmembrane segment spans residues 120 to 141; that stretch reads FDDFIFAFFAVEMVVKMVALGI. At 142-150 the chain is on the cytoplasmic side; sequence FGKKCYLGD. The chain crosses the membrane as a helical span at residues 151–170; the sequence is TWNRLDFFIVIAGMLEYSLD. Topologically, residues 171-175 are extracellular; sequence LQNVS. Asn-173 carries N-linked (GlcNAc...) asparagine glycosylation. The chain crosses the membrane as a helical span at residues 176–193; that stretch reads FSAVRTVRVLRPLRAINR. Topologically, residues 194-213 are cytoplasmic; it reads VPSMRILVTLLLDTLPMLGN. A helical transmembrane segment spans residues 214–234; it reads VLLLCFFVFFIFGIVGVQLWA. The Extracellular segment spans residues 235–370; sequence GLLRNRCFLP…YFVMDAHSFY (136 aa). Residues Asn-246, Asn-306, Asn-310, and Asn-322 are each glycosylated (N-linked (GlcNAc...) asparagine). A helical membrane pass occupies residues 371 to 395; the sequence is NFIYFILLIIVGSFFMINLCLVVIA. Over 396-744 the chain is Cytoplasmic; sequence TQFSETKQRE…DTFRKIVDSK (349 aa). Ser-467 carries the phosphoserine modification. Positions 494–506 are enriched in basic residues; the sequence is LVHHHHHHHHHYH. Disordered stretches follow at residues 494-513, 525-553, 579-598, and 699-721; these read LVHH…GTLR, DANG…AESV, ASGR…TSPP, and DAQH…GPDA. Pro residues predominate over residues 534-545; the sequence is LPPPSTPTPSGG. Ser-716 bears the Phosphoserine mark. Residues 730 to 968 form an II repeat; the sequence is WRLICDTFRK…LLVAILVEGF (239 aa). The helical transmembrane segment at 745-765 threads the bilayer; sequence YFGRGIMIAILVNTLSMGIEY. The Extracellular segment spans residues 766 to 778; it reads HEQPEELTNALEI. The helical transmembrane segment at 779–800 threads the bilayer; the sequence is SNIVFTSLFALEMLLKLLVYGP. Residues 801–806 lie on the Cytoplasmic side of the membrane; the sequence is FGYIKN. A helical transmembrane segment spans residues 807–825; that stretch reads PYNIFDGVIVVISVWEIVG. The Extracellular portion of the chain corresponds to 826–833; the sequence is QQGGGLSV. The helical transmembrane segment at 834 to 857 threads the bilayer; it reads LRTFRLMRVLKLVRFLPALQRQLV. Residues 858 to 868 are Cytoplasmic-facing; the sequence is VLMKTMDNVAT. Residues 869–889 traverse the membrane as a helical segment; sequence FCMLLMLFIFIFSILGMHLFG. The Extracellular portion of the chain corresponds to 890–940; it reads CKFASERDGDTLPDRKNFDSLLWAIVTVFQILTQEDWNKVLYNGMASTSSW. The helical transmembrane segment at 941–965 threads the bilayer; that stretch reads AALYFIALMTFGNYVLFNLLVAILV. Residues 966-1251 lie on the Cytoplasmic side of the membrane; that stretch reads EGFQAEGDAT…SRFRLLCHRI (286 aa). A disordered region spans residues 1024–1209; it reads TPMSHPKSSS…GDDDNDEGNL (186 aa). 2 stretches are compositionally biased toward low complexity: residues 1041 to 1052 and 1065 to 1091; these read GSGSRRTSSSGS and PPSA…SRNS. 2 stretches are compositionally biased toward acidic residues: residues 1117 to 1126 and 1196 to 1206; these read ESQDEEESSE and PQLDGDDDNDE. Phosphoserine is present on residues Ser-1118, Ser-1124, and Ser-1125. One copy of the III repeat lies at 1242–1519; sequence SRFRLLCHRI…MFVGVVVENF (278 aa). Residues 1252–1274 form a helical membrane-spanning segment; sequence ITHKMFDHVVLVIIFLNCITIAM. At 1275-1292 the chain is on the extracellular side; the sequence is ERPKIDPHSAERIFLTLS. A helical transmembrane segment spans residues 1293–1313; it reads NYIFTAVFLAEMTVKVVALGW. Residues 1314-1323 lie on the Cytoplasmic side of the membrane; the sequence is CFGEQAYLRS. The helical transmembrane segment at 1324–1343 threads the bilayer; it reads SWNVLDGLLVLISVIDILVS. Residues 1344-1357 are Extracellular-facing; sequence MVSDSGTKILGMLR. The helical transmembrane segment at 1358–1379 threads the bilayer; that stretch reads VLRLLRTLRPLRVISRAQGLKL. At 1380-1389 the chain is on the cytoplasmic side; the sequence is VVETLMSSLK. A helical transmembrane segment spans residues 1390–1413; sequence PIGNIVVICCAFFIIFGILGVQLF. Residues 1414–1490 are Extracellular-facing; it reads KGKFFVCQGE…DQQPIMNHNP (77 aa). Asn-1427 and Asn-1430 each carry an N-linked (GlcNAc...) asparagine glycan. A helical transmembrane segment spans residues 1491-1516; the sequence is WMLLYFISFLLIVAFFVLNMFVGVVV. Residues 1517–1578 lie on the Cytoplasmic side of the membrane; sequence ENFHKCRQHQ…RLLVHHLCTS (62 aa). One copy of the IV repeat lies at 1564–1822; that stretch reads DYSRFRLLVH…VVIAVLMKHL (259 aa). A helical membrane pass occupies residues 1579–1599; the sequence is HYLDLFITGVIGLNVVTMAME. The Extracellular segment spans residues 1600–1613; sequence HYQQPQILDEALKI. Residues 1614-1635 traverse the membrane as a helical segment; it reads CNYIFTVIFVFESVFKLVAFGF. Residues 1636-1642 are Cytoplasmic-facing; it reads RRFFQDR. The helical transmembrane segment at 1643–1661 threads the bilayer; the sequence is WNQLDLAIVLLSIMGITLE. At 1662-1675 the chain is on the extracellular side; that stretch reads EIEVNLSLPINPTI. N-linked (GlcNAc...) asparagine glycosylation is present at Asn-1666. A helical transmembrane segment spans residues 1676–1699; the sequence is IRIMRVLRIARVLKLLKMAVGMRA. At 1700–1713 the chain is on the cytoplasmic side; the sequence is LLHTVMQALPQVGN. A helical membrane pass occupies residues 1714-1734; sequence LGLLFMLLFFIFAALGVELFG. The Extracellular portion of the chain corresponds to 1735-1794; it reads DLECDETHPCEGLGRHATFRNFGMAFLTLFRVSTGDNWNGIMKDTLRDCDQESTCYNTVI. Residues 1795–1822 traverse the membrane as a helical segment; the sequence is SPIYFVSFVLTAQFVLVNVVIAVLMKHL. Over 1823-2254 the chain is Cytoplasmic; the sequence is EESNKEAKEE…LSSDPTDMDP (432 aa). Residues 2153-2254 are disordered; that stretch reads DSGSQPRLCP…LSSDPTDMDP (102 aa). The span at 2184-2193 shows a compositional bias: low complexity; sequence SPPSISIDPP. 2 stretches are compositionally biased toward polar residues: residues 2220 to 2232 and 2240 to 2254; these read PSVS…TAAS and LSLS…DMDP.

It belongs to the calcium channel alpha-1 subunit (TC 1.A.1.11) family. CACNA1G subfamily. In response to raising of intracellular calcium, the T-type channels are activated by CaM-kinase II. In terms of tissue distribution, highly expressed in brain. Moderate expression in heart; low expression in placenta, kidney and lung.

The protein localises to the cell membrane. The protein resides in the cytoplasm. It carries out the reaction Ca(2+)(in) = Ca(2+)(out). In terms of biological role, voltage-sensitive calcium channels (VSCC) mediate the entry of calcium ions into excitable cells and are also involved in a variety of calcium-dependent processes, including muscle contraction, hormone or neurotransmitter release, gene expression, cell motility, cell division and cell death. The isoform alpha-1G gives rise to T-type calcium currents. T-type calcium channels belong to the 'low-voltage activated (LVA)' group and are strongly blocked by nickel and mibefradil. A particularity of this type of channels is an opening at quite negative potentials and a voltage-dependent inactivation. T-type channels serve pacemaking functions in both central neurons and cardiac nodal cells and support calcium signaling in secretory cells and vascular smooth muscle. They may also be involved in the modulation of firing patterns of neurons which is important for information processing as well as in cell growth processes. The polypeptide is Voltage-dependent T-type calcium channel subunit alpha-1G (Cacna1g) (Rattus norvegicus (Rat)).